The chain runs to 159 residues: Ribosomal RNA large subunit methyltransferase H (159 aa).

Residues Leu-76, Gly-108, and 127–132 (FSKMTF) each bind S-adenosyl-L-methionine.

It belongs to the RNA methyltransferase RlmH family. As to quaternary structure, homodimer.

The protein localises to the cytoplasm. It catalyses the reaction pseudouridine(1915) in 23S rRNA + S-adenosyl-L-methionine = N(3)-methylpseudouridine(1915) in 23S rRNA + S-adenosyl-L-homocysteine + H(+). Functionally, specifically methylates the pseudouridine at position 1915 (m3Psi1915) in 23S rRNA. The protein is Ribosomal RNA large subunit methyltransferase H of Halalkalibacterium halodurans (strain ATCC BAA-125 / DSM 18197 / FERM 7344 / JCM 9153 / C-125) (Bacillus halodurans).